Here is a 946-residue protein sequence, read N- to C-terminus: Increased sodium tolerance protein 2 (946 aa).

Over 1 to 121 the chain is Cytoplasmic; sequence MSQTITSLDP…SNLTNNPKQS (121 aa). A helical membrane pass occupies residues 122–142; sequence LYFAFLQNYIKWLIPFSFFGL. At 143–153 the chain is on the extracellular side; that stretch reads SIRFLSNFTYE. The chain crosses the membrane as a helical span at residues 154-174; that stretch reads FNSTYSLFAILWTLSFTAFWL. Topologically, residues 175–217 are cytoplasmic; it reads YKYEPFWSDRLSKYSSFSTIEFLQDKQKAQKKASSVIMLKKCC. A helical membrane pass occupies residues 218–238; sequence FIPVALLFGAILLSFQLYCFA. At 239–253 the chain is on the extracellular side; the sequence is LEIFIKQIYNGPMIS. The chain crosses the membrane as a helical span at residues 254–274; sequence ILSFLPTILICTFTPVLTVIY. At 275–302 the chain is on the cytoplasmic side; it reads NKYFVEPMTKWENHSSVVNAKKSKEAKN. Residues 303–323 form a helical membrane-spanning segment; it reads FVIIFLSSYVPLLITLFLYLP. Over 324 to 447 the chain is Extracellular; the sequence is MGHLLTAEIR…DANFKKLLLQ (124 aa). The chain crosses the membrane as a helical span at residues 448–468; the sequence is FGYLVMFSTIWPLAPFICLIV. Topologically, residues 469 to 505 are cytoplasmic; the sequence is NLIVYQVDLRKAVLYSKPEYFPFPIYDKPSSVSNTQK. A helical transmembrane segment spans residues 506–526; it reads LTVGLWNSVLVMFSILGCVIT. Over 527–563 the chain is Extracellular; sequence ATLTYMYQSCNIPGVGAHTSIHTNKAWYLANPINHSW. The helical transmembrane segment at 564–584 threads the bilayer; the sequence is INIVLYAVFIEHVSVAIFFLF. Over 585–946 the chain is Cytoplasmic; it reads SSILKSSHDD…GLLHKLKKKL (362 aa). 2 disordered regions span residues 617–638 and 665–718; these read EKIP…RKGS and THAN…TEKR. A compositionally biased stretch (basic and acidic residues) spans 628 to 638; it reads NEKELVQRKGS. Residue Ser638 is modified to Phosphoserine. A compositionally biased stretch (low complexity) spans 671–689; it reads PSSLSSASSPSLSSSSSSS. A Phosphothreonine modification is found at Thr701. 2 positions are modified to phosphoserine: Ser704 and Ser720. Residue Thr726 is modified to Phosphothreonine. Position 729 is a phosphoserine (Ser729). A Phosphotyrosine modification is found at Tyr730. The residue at position 757 (Ser757) is a Phosphoserine. Positions 759 to 784 are disordered; that stretch reads RDAKSSAESSNATNNNTLGTESKLLP. Residues 764–775 are compositionally biased toward low complexity; the sequence is SAESSNATNNNT. Phosphoserine occurs at positions 793, 844, and 847. The tract at residues 846–946 is disordered; sequence VSVATEQTKK…GLLHKLKKKL (101 aa). Thr850 is modified (phosphothreonine). The span at 859-868 shows a compositional bias: polar residues; the sequence is STKNGPSRSI. Low complexity predominate over residues 884–893; that stretch reads TTTTTTTDAT. The segment covering 895–905 has biased composition (basic residues); it reads PHHHHHHHRHR. The span at 916–927 shows a compositional bias: low complexity; that stretch reads SKTTESSSSSSA. Residues 931–946 are compositionally biased toward basic residues; the sequence is KPKHKKGLLHKLKKKL.

In terms of assembly, interacts with BTN2.

It localises to the cell membrane. In terms of biological role, may be involved in ion homeostasis together with BTN1 or BTN2. The protein is Increased sodium tolerance protein 2 (IST2) of Saccharomyces cerevisiae (strain ATCC 204508 / S288c) (Baker's yeast).